Consider the following 40-residue polypeptide: Fibrinolytic protease (40 aa).

In terms of domain architecture, Peptidase S1 spans isoleucine 1–proline 40.

Belongs to the peptidase S1 family.

Its subcellular location is the secreted. It is found in the extracellular space. Its function is as follows. Serine protease with fibrinolytic activity. In Euphausia superba (Antarctic krill), this protein is Fibrinolytic protease.